Consider the following 517-residue polypeptide: AAA ATPase forming ring-shaped complexes (517 aa).

Residues 25–53 are a coiled coil; it reads ARNAKLVELLQASRTKLEEINGRLEALAE. 233–238 serves as a coordination point for ATP; it reads GNGKTL.

The protein belongs to the AAA ATPase family. In terms of assembly, homohexamer. Assembles into a hexameric ring structure.

In Corynebacterium jeikeium (strain K411), this protein is AAA ATPase forming ring-shaped complexes.